A 106-amino-acid chain; its full sequence is MEPYAVIQTGSKQYQVRSGDVIDVELLGEVASDKEVIFQDVLFVFDGTKASLGSPTIANAQVKAEYLSHVKGEKVVAYKYKKRKNYHRKHGHRQKYLRVKIREILI.

The protein belongs to the bacterial ribosomal protein bL21 family. Part of the 50S ribosomal subunit. Contacts protein L20.

Its function is as follows. This protein binds to 23S rRNA in the presence of protein L20. The polypeptide is Large ribosomal subunit protein bL21 (Chlamydia pneumoniae (Chlamydophila pneumoniae)).